The following is a 101-amino-acid chain: Small ribosomal subunit protein uS14 (101 aa).

It belongs to the universal ribosomal protein uS14 family. Part of the 30S ribosomal subunit. Contacts proteins S3 and S10.

In terms of biological role, binds 16S rRNA, required for the assembly of 30S particles and may also be responsible for determining the conformation of the 16S rRNA at the A site. The chain is Small ribosomal subunit protein uS14 from Erythrobacter litoralis (strain HTCC2594).